The sequence spans 466 residues: 3-isopropylmalate dehydratase large subunit (466 aa).

Residues C347, C407, and C410 each contribute to the [4Fe-4S] cluster site.

This sequence belongs to the aconitase/IPM isomerase family. LeuC type 1 subfamily. As to quaternary structure, heterodimer of LeuC and LeuD. [4Fe-4S] cluster serves as cofactor.

It carries out the reaction (2R,3S)-3-isopropylmalate = (2S)-2-isopropylmalate. It participates in amino-acid biosynthesis; L-leucine biosynthesis; L-leucine from 3-methyl-2-oxobutanoate: step 2/4. In terms of biological role, catalyzes the isomerization between 2-isopropylmalate and 3-isopropylmalate, via the formation of 2-isopropylmaleate. The chain is 3-isopropylmalate dehydratase large subunit from Cronobacter sakazakii (strain ATCC BAA-894) (Enterobacter sakazakii).